The chain runs to 252 residues: Large ribosomal subunit protein uL4 (252 aa).

The protein belongs to the universal ribosomal protein uL4 family. As to quaternary structure, part of the 50S ribosomal subunit.

In terms of biological role, one of the primary rRNA binding proteins, this protein initially binds near the 5'-end of the 23S rRNA. It is important during the early stages of 50S assembly. It makes multiple contacts with different domains of the 23S rRNA in the assembled 50S subunit and ribosome. Its function is as follows. Forms part of the polypeptide exit tunnel. The chain is Large ribosomal subunit protein uL4 from Methanococcus maripaludis (strain C6 / ATCC BAA-1332).